Here is a 512-residue protein sequence, read N- to C-terminus: Immunoglobulin delta heavy chain (512 aa).

2 consecutive Ig-like domains span residues 1 to 97 and 135 to 227; these read RLQL…MYYC and PDVF…KEIF. The interval 1-129 is variable (V) domain, involved in antigen recognition; sequence RLQLQESGPG…GQGTTVHVSS (129 aa). Disulfide bonds link Cys-22-Cys-97 and Cys-157-Cys-213. Residues 130–512 are constant (C) domain; it reads APTKAPDVFP…VSYVTDHGPM (383 aa). Residues 225 to 296 form a disordered region; sequence EIFRWPESPK…TPECPSHTQP (72 aa). Residues 235 to 247 are compositionally biased toward polar residues; it reads AQASSVPTAQPQA. Ser-238 carries O-linked (GalNAc...) serine glycosylation. O-linked (GalNAc...) threonine glycans are attached at residues Thr-255, Thr-256, Thr-260, and Thr-261. Positions 267–287 are enriched in basic and acidic residues; the sequence is GGEEKKKEKEKEEQEERETKT. Ig-like domains lie at 304-392 and 396-502; these read PAVQ…RLMA and PAAQ…RSLE. Disulfide bonds link Cys-319–Cys-378 and Cys-423–Cys-484. N-linked (GlcNAc...) asparagine glycans are attached at residues Asn-354, Asn-445, and Asn-496.

In terms of assembly, immunoglobulins are composed of two identical heavy chains and two identical light chains; disulfide-linked. An IgD molecule contains thus a delta heavy chain combined with either a kappa or a lambda light chains. Kappa light chains are found predominantly on the membrane IgD (mIgD) form and lambda on the secreted IgD (sIgD) form, this fact is poorly understood. Membrane-bound IgD molecules are non-covalently associated with a heterodimer of CD79A and CD79B.

Its subcellular location is the secreted. It localises to the cell membrane. Its function is as follows. Immunoglobulins, also known as antibodies, are membrane-bound or secreted glycoproteins produced by B lymphocytes. In the recognition phase of humoral immunity, the membrane-bound immunoglobulins serve as receptors which, upon binding of a specific antigen, trigger the clonal expansion and differentiation of B lymphocytes into immunoglobulins-secreting plasma cells. Secreted immunoglobulins mediate the effector phase of humoral immunity, which results in the elimination of bound antigens. The antigen binding site is formed by the variable domain of one heavy chain, together with that of its associated light chain. Thus, each immunoglobulin has two antigen binding sites with remarkable affinity for a particular antigen. The variable domains are assembled by a process called V-(D)-J rearrangement and can then be subjected to somatic hypermutations which, after exposure to antigen and selection, allow affinity maturation for a particular antigen. IgD is the major antigen receptor isotype on the surface of most peripheral B cells, where it is coexpressed with IgM. The membrane-bound IgD (mIgD) induces the phosphorylation of CD79A and CD79B by the Src family of protein tyrosine kinases. Soluble IgD (sIgD) concentration in serum is below those of IgG, IgA, and IgM but much higher than that of IgE. IgM and IgD molecules present on B cells have identical V regions and antigen-binding sites. After the antigen binds to the B cell receptor, the secreted form sIgD is shut off. IgD is a potent inducer of TNF, IL1B, and IL1RN. IgD also induces release of IL6, IL10, and LIF from peripheral blood mononuclear cells. Monocytes seem to be the main producers of cytokines in vitro in the presence of IgD. This Homo sapiens (Human) protein is Immunoglobulin delta heavy chain.